A 197-amino-acid chain; its full sequence is Phosphoheptose isomerase (197 aa).

Residues 34 to 196 (MVHCLLGGNK…DRTLFPQDEQ (163 aa)) enclose the SIS domain. Residue 49-51 (NGG) participates in substrate binding. Zn(2+) is bound by residues H58 and E62. Substrate contacts are provided by residues E62, 91-92 (ND), 117-119 (STS), S122, and Q172. Zn(2+) is bound by residues Q172 and H180.

It belongs to the SIS family. GmhA subfamily. Homotetramer. The cofactor is Zn(2+).

The protein localises to the cytoplasm. It catalyses the reaction 2 D-sedoheptulose 7-phosphate = D-glycero-alpha-D-manno-heptose 7-phosphate + D-glycero-beta-D-manno-heptose 7-phosphate. It functions in the pathway carbohydrate biosynthesis; D-glycero-D-manno-heptose 7-phosphate biosynthesis; D-glycero-alpha-D-manno-heptose 7-phosphate and D-glycero-beta-D-manno-heptose 7-phosphate from sedoheptulose 7-phosphate: step 1/1. In terms of biological role, catalyzes the isomerization of sedoheptulose 7-phosphate in D-glycero-D-manno-heptose 7-phosphate. This Shewanella baltica (strain OS223) protein is Phosphoheptose isomerase.